Reading from the N-terminus, the 137-residue chain is Large ribosomal subunit protein uL16 (137 aa).

It belongs to the universal ribosomal protein uL16 family. As to quaternary structure, part of the 50S ribosomal subunit.

In terms of biological role, binds 23S rRNA and is also seen to make contacts with the A and possibly P site tRNAs. The protein is Large ribosomal subunit protein uL16 of Spiroplasma kunkelii.